The following is a 144-amino-acid chain: Granulocyte-macrophage colony-stimulating factor (144 aa).

The signal sequence occupies residues 1-17 (MWLQGLLLLGTVACSIS). O-linked (GalNAc...) serine glycosylation is present at serine 24. Threonine 27 carries O-linked (GalNAc...) threonine glycosylation. Asparagine 44 and asparagine 54 each carry an N-linked (GlcNAc...) asparagine glycan. 2 cysteine pairs are disulfide-bonded: cysteine 71–cysteine 113 and cysteine 105–cysteine 138.

The protein belongs to the GM-CSF family. In terms of assembly, monomer. The signaling GM-CSF receptor complex is a dodecamer of two head-to-head hexamers of two alpha, two beta, and two ligand subunits.

It is found in the secreted. In terms of biological role, cytokine that stimulates the growth and differentiation of hematopoietic precursor cells from various lineages, including granulocytes, macrophages, eosinophils and erythrocytes. The polypeptide is Granulocyte-macrophage colony-stimulating factor (CSF2) (Chlorocebus aethiops (Green monkey)).